The following is a 527-amino-acid chain: Cyclin-L1 (527 aa).

The segment at methionine 1 to threonine 37 is disordered. Cyclin-like regions lie at residues glutamate 89–lysine 191 and lysine 204–arginine 288. At threonine 326 the chain carries Phosphothreonine. The segment at proline 327–arginine 527 is disordered. 2 positions are modified to phosphoserine: serine 336 and serine 339. Residues lysine 340 and lysine 348 each participate in a glycyl lysine isopeptide (Lys-Gly) (interchain with G-Cter in SUMO2) cross-link. The segment covering serine 343–serine 353 has biased composition (basic and acidic residues). Phosphoserine is present on residues serine 353 and serine 356. Residues valine 362 to glutamine 371 are compositionally biased toward basic and acidic residues. Lysine 363 participates in a covalent cross-link: Glycyl lysine isopeptide (Lys-Gly) (interchain with G-Cter in SUMO2). At serine 375 the chain carries Phosphoserine. 4 stretches are compositionally biased toward basic residues: residues aspartate 383–arginine 419, arginine 439–histidine 453, serine 461–serine 477, and lysine 487–arginine 499. Residues arginine 391–serine 433 are RS. Serine 446 bears the Phosphoserine mark. Basic and acidic residues predominate over residues arginine 500–serine 509. A compositionally biased stretch (basic residues) spans histidine 510–arginine 527.

It belongs to the cyclin family. Cyclin L subfamily. As to quaternary structure, interacts with POLR2A via its hyperphosphorylated C-terminal domain (CTD). Interacts with CDK11A, CDK11B, CDK12 and CDK13. May form a ternary complex with CDK11B and casein kinase II (CKII). Interacts with pre-mRNA-splicing factors, including at least SRSF1, SRSF2 AND SRSF7/SLU7. Ubiquitous with higher level in liver; expressed in striatal neurons.

It is found in the nucleus speckle. The protein localises to the nucleus. The protein resides in the nucleoplasm. Functionally, involved in pre-mRNA splicing. Functions in association with cyclin-dependent kinases (CDKs). May play a role in the regulation of RNA polymerase II (pol II). Inhibited by the CDK-specific inhibitor CDKN1A/p21. The sequence is that of Cyclin-L1 (Ccnl1) from Rattus norvegicus (Rat).